Here is a 345-residue protein sequence, read N- to C-terminus: Selenide, water dikinase (345 aa).

Residue C16 is part of the active site. Residues K19 and 46–48 (TSD) each bind ATP. Mg(2+) is bound at residue D49. Residues D66, D89, and 136-138 (GHT) contribute to the ATP site. D89 provides a ligand contact to Mg(2+). D224 serves as a coordination point for Mg(2+).

Belongs to the selenophosphate synthase 1 family. Class I subfamily. As to quaternary structure, homodimer. It depends on Mg(2+) as a cofactor.

It catalyses the reaction hydrogenselenide + ATP + H2O = selenophosphate + AMP + phosphate + 2 H(+). Functionally, synthesizes selenophosphate from selenide and ATP. This is Selenide, water dikinase from Clostridium botulinum (strain Alaska E43 / Type E3).